The following is a 379-amino-acid chain: Alcohol dehydrogenase class-2 isozyme 1 (379 aa).

Zn(2+) contacts are provided by C47, H69, C99, C102, C105, C113, and C176. NAD(+) is bound by residues 205-210, D229, K234, 298-300, and R374; these read GLGGVG and VGV.

Belongs to the zinc-containing alcohol dehydrogenase family. Class-II subfamily. Homodimer. The cofactor is Zn(2+).

It localises to the cytoplasm. The enzyme catalyses a primary alcohol + NAD(+) = an aldehyde + NADH + H(+). The catalysed reaction is a secondary alcohol + NAD(+) = a ketone + NADH + H(+). This Oryctolagus cuniculus (Rabbit) protein is Alcohol dehydrogenase class-2 isozyme 1 (ADH2-1).